Here is a 282-residue protein sequence, read N- to C-terminus: Ammonia transport outward protein 2 (282 aa).

Positions Met-1 to Ser-34 are disordered. At Ser-2 the chain carries N-acetylserine. 6 positions are modified to phosphoserine: Ser-2, Ser-7, Ser-21, Ser-22, Ser-28, and Ser-40. Residues Ser-2 to Phe-86 lie on the Extracellular side of the membrane. Residues Ala-87–Phe-107 form a helical membrane-spanning segment. Residues Asn-108–Val-119 are Cytoplasmic-facing. Residues Val-120–Ile-140 traverse the membrane as a helical segment. Over Ala-141 to Ala-150 the chain is Extracellular. The helical transmembrane segment at Leu-151–Ile-171 threads the bilayer. Topologically, residues Leu-172 to Asn-184 are cytoplasmic. Residues Ala-185 to Met-205 traverse the membrane as a helical segment. The Extracellular segment spans residues Lys-206–Ser-207. Residues Thr-208–Ala-228 form a helical membrane-spanning segment. Over Asn-229 to Arg-238 the chain is Cytoplasmic. Residues Ala-239–Ile-259 form a helical membrane-spanning segment. At Ala-260–Phe-282 the chain is on the extracellular side.

It belongs to the acetate uptake transporter (AceTr) (TC 2.A.96) family.

It localises to the cell membrane. Functionally, transporter protein required for ammonia export. Involved in acetate resistance. The protein is Ammonia transport outward protein 2 (ATO2) of Saccharomyces cerevisiae (strain ATCC 204508 / S288c) (Baker's yeast).